The following is a 227-amino-acid chain: Ribosomal RNA small subunit methyltransferase G (227 aa).

S-adenosyl-L-methionine-binding positions include G74, L79, 124 to 125 (AE), and R142.

This sequence belongs to the methyltransferase superfamily. RNA methyltransferase RsmG family.

The protein resides in the cytoplasm. Functionally, specifically methylates the N7 position of guanine in position 518 of 16S rRNA. The polypeptide is Ribosomal RNA small subunit methyltransferase G (Mycolicibacterium gilvum (strain PYR-GCK) (Mycobacterium gilvum (strain PYR-GCK))).